The following is a 630-amino-acid chain: Plastin-1 (630 aa).

At M1 the chain carries N-acetylmethionine. EF-hand domains are found at residues 11–46 (EELE…ASLP) and 51–86 (KVRE…LKSK). 10 residues coordinate Ca(2+): D24, D26, S28, Y30, E35, D64, N66, D68, K70, and E75. Actin-binding regions lie at residues 108 to 381 (TSSI…CLHK) and 382 to 626 (PDNN…GKGL). 4 consecutive Calponin-homology (CH) domains span residues 122-238 (EEEK…KVGL), 266-377 (LSPE…NTYP), 396-505 (SKEE…RRYT), and 517-626 (KVTD…GKGL).

Monomer. Phosphorylated. In the inner ear, it is expressed in the organ of Corti. Abundant in the utricle (at protein level).

It localises to the cytoplasm. The protein resides in the cell projection. It is found in the stereocilium. In terms of biological role, actin-bundling protein. In the inner ear, it is required for stereocilia formation. Mediates liquid packing of actin filaments that is necessary for stereocilia to grow to their proper dimensions. This chain is Plastin-1 (Pls1), found in Mus musculus (Mouse).